The following is a 256-amino-acid chain: Pyrroloquinoline-quinone synthase (256 aa).

The protein belongs to the PqqC family.

The catalysed reaction is 6-(2-amino-2-carboxyethyl)-7,8-dioxo-1,2,3,4,7,8-hexahydroquinoline-2,4-dicarboxylate + 3 O2 = pyrroloquinoline quinone + 2 H2O2 + 2 H2O + H(+). It participates in cofactor biosynthesis; pyrroloquinoline quinone biosynthesis. In terms of biological role, ring cyclization and eight-electron oxidation of 3a-(2-amino-2-carboxyethyl)-4,5-dioxo-4,5,6,7,8,9-hexahydroquinoline-7,9-dicarboxylic-acid to PQQ. This Rhizobium meliloti (strain 1021) (Ensifer meliloti) protein is Pyrroloquinoline-quinone synthase.